Here is a 282-residue protein sequence, read N- to C-terminus: MPELPEVETVRRGLTQQTLQRVCTGGEVLLSRTIATPTPELFLVALQQTQIQEWRRRGKYLLADLSREGEPAGTWGVHLRMTGQFFWTEPATPLTKHTRVRLRFEGDRELRFIDIRSFGQMWWVPPDRPVESVITGLSKLGPEPFAPEFTARYLRDRLRRSQRPIKTALLDQSLVAGIGNIYADESLFRTGIHPTTPSDRLTKIQAEKLREAIVEVLTASIGAGGTTFSDFRDLTGVNGNYGGQAWVYGRKDQPCRTCGTPIQKLKLAGRSSHFCPRCQPCS.

The active-site Schiff-base intermediate with DNA is the P2. The active-site Proton donor is E3. Residue K59 is the Proton donor; for beta-elimination activity of the active site. Positions 97 and 116 each coordinate DNA. The segment at 246–280 (WVYGRKDQPCRTCGTPIQKLKLAGRSSHFCPRCQP) adopts an FPG-type zinc-finger fold. The Proton donor; for delta-elimination activity role is filled by R270.

This sequence belongs to the FPG family. In terms of assembly, monomer. Zn(2+) is required as a cofactor.

The enzyme catalyses Hydrolysis of DNA containing ring-opened 7-methylguanine residues, releasing 2,6-diamino-4-hydroxy-5-(N-methyl)formamidopyrimidine.. It catalyses the reaction 2'-deoxyribonucleotide-(2'-deoxyribose 5'-phosphate)-2'-deoxyribonucleotide-DNA = a 3'-end 2'-deoxyribonucleotide-(2,3-dehydro-2,3-deoxyribose 5'-phosphate)-DNA + a 5'-end 5'-phospho-2'-deoxyribonucleoside-DNA + H(+). In terms of biological role, involved in base excision repair of DNA damaged by oxidation or by mutagenic agents. Acts as a DNA glycosylase that recognizes and removes damaged bases. Has a preference for oxidized purines, such as 7,8-dihydro-8-oxoguanine (8-oxoG). Has AP (apurinic/apyrimidinic) lyase activity and introduces nicks in the DNA strand. Cleaves the DNA backbone by beta-delta elimination to generate a single-strand break at the site of the removed base with both 3'- and 5'-phosphates. This is Formamidopyrimidine-DNA glycosylase (mutM) from Synechococcus sp. (strain ATCC 27144 / PCC 6301 / SAUG 1402/1) (Anacystis nidulans).